We begin with the raw amino-acid sequence, 213 residues long: Kynurenine formamidase (213 aa).

Substrate is bound at residue Trp18. Positions 48, 52, and 54 each coordinate Zn(2+). The active-site Proton donor/acceptor is His58. Zn(2+) contacts are provided by His160 and Glu172.

This sequence belongs to the Cyclase 1 superfamily. KynB family. As to quaternary structure, homodimer. Requires Zn(2+) as cofactor.

It catalyses the reaction N-formyl-L-kynurenine + H2O = L-kynurenine + formate + H(+). It functions in the pathway amino-acid degradation; L-tryptophan degradation via kynurenine pathway; L-kynurenine from L-tryptophan: step 2/2. In terms of biological role, catalyzes the hydrolysis of N-formyl-L-kynurenine to L-kynurenine, the second step in the kynurenine pathway of tryptophan degradation. In Burkholderia thailandensis (strain ATCC 700388 / DSM 13276 / CCUG 48851 / CIP 106301 / E264), this protein is Kynurenine formamidase.